The following is a 657-amino-acid chain: Pentatricopeptide repeat-containing protein At5g44230 (657 aa).

PPR repeat units follow at residues K45–Q79, S80–R112, N113–P147, V148–L178, F183–R213, D214–K244, D245–A279, D280–P314, H317–K347, N348–P383, N384–P419, and T420–E450. Residues V455–K530 are type E motif. The interval G532 to T562 is type E(+) motif. The segment at V563 to W657 is type DYW motif.

Belongs to the PPR family. PCMP-H subfamily.

The protein is Pentatricopeptide repeat-containing protein At5g44230 (PCMP-H17) of Arabidopsis thaliana (Mouse-ear cress).